Consider the following 207-residue polypeptide: Large ribosomal subunit protein uL4 (207 aa).

Positions 44-76 are disordered; the sequence is KRRGTASAKTRSEVRGGGRKPWRQKGTGRARHG. Residues 60 to 76 are compositionally biased toward basic residues; that stretch reads GGRKPWRQKGTGRARHG.

The protein belongs to the universal ribosomal protein uL4 family. As to quaternary structure, part of the 50S ribosomal subunit.

In terms of biological role, one of the primary rRNA binding proteins, this protein initially binds near the 5'-end of the 23S rRNA. It is important during the early stages of 50S assembly. It makes multiple contacts with different domains of the 23S rRNA in the assembled 50S subunit and ribosome. Its function is as follows. Forms part of the polypeptide exit tunnel. This is Large ribosomal subunit protein uL4 from Natranaerobius thermophilus (strain ATCC BAA-1301 / DSM 18059 / JW/NM-WN-LF).